A 174-amino-acid polypeptide reads, in one-letter code: uncharacterized protein (174 aa).

The helical transmembrane segment at 7–24 (LLLLAFAVCLAVGFSGCL) threads the bilayer.

Its subcellular location is the membrane. This is an uncharacterized protein from Methanocaldococcus jannaschii (strain ATCC 43067 / DSM 2661 / JAL-1 / JCM 10045 / NBRC 100440) (Methanococcus jannaschii).